We begin with the raw amino-acid sequence, 152 residues long: Chemokine-like factor (152 aa).

The MARVEL domain maps to 13 to 133; sequence FCFSVKGHVK…DGALIYRKLL (121 aa). Transmembrane regions (helical) follow at residues 45 to 65, 81 to 101, and 108 to 128; these read YIVI…LYVL, IINS…ALIP, and VGGG…GALI.

It belongs to the chemokine-like factor family. Isoform 1, isoform 2, isoform 3 and isoform 4 have highest expression levels in adult spleen, lung, testis, ovary, peripheral blood leukocyte, placenta, pancreas, and in fetal brain, skeletal muscle, thymus and heart. Lower expression levels in adult skeletal muscle, liver, thymus colon, prostate and fetal spleen and liver.

It localises to the secreted. The protein localises to the membrane. Partly inhibited by interleukin 10. Its function is as follows. May play an important role in inflammation and regeneration of skeletal muscle. Essential for embryonic development. In terms of biological role, has chemotactic response in monocytes, neutrophils and lymphocytes. Binds CCR4. The chain is Chemokine-like factor (CKLF) from Homo sapiens (Human).